We begin with the raw amino-acid sequence, 275 residues long: Trypsin-4 (275 aa).

An N-terminal signal peptide occupies residues M1–C18. A propeptide spans A19 to R48 (activation peptide). A Peptidase S1 domain is found at I49–G274. A disulfide bond links C74 and C90. Residues H89 and D134 each act as charge relay system in the active site. 2 disulfide bridges follow: C199–C215 and C226–C250. The active-site Charge relay system is S230.

It belongs to the peptidase S1 family. As to expression, expressed in the midgut. Expression levels drop a few hours after blood feeding and pick up again 28 hours later.

The protein resides in the secreted. It catalyses the reaction Preferential cleavage: Arg-|-Xaa, Lys-|-Xaa.. Its function is as follows. Constitutive trypsin that is expressed 2 days after emergence, coinciding with host seeking behavior of the female. This is Trypsin-4 (TRYP4) from Anopheles gambiae (African malaria mosquito).